A 402-amino-acid polypeptide reads, in one-letter code: GPI mannosyltransferase 1 (402 aa).

10 helical membrane passes run 5–25 (VILLLTVSLLLRIGFFSYGIF), 79–99 (WIHMGKVFFVLFDLITGVMII), 108–128 (LTKQLILASIWLLNPIVITIS), 162–182 (LSIHFKIYPIIYALPIGIYLL), 191–211 (IWRLFMIGISTLIGITAPTYF), 238–258 (FSIWNLVLLLESAGIHLSQSI), 260–280 (LSKLAFVPQLTLCAVLPYLLW), 309–329 (QYFIWYLVLSPFYFANTTITW), 333–353 (VVCIFLWILSQAVWLSQAYLL), and 365–385 (LFFGNIVFFLINVYLLGVFIT).

The protein belongs to the PIGM family.

Its subcellular location is the endoplasmic reticulum membrane. It functions in the pathway glycolipid biosynthesis; glycosylphosphatidylinositol-anchor biosynthesis. In terms of biological role, mannosyltransferase involved in glycosylphosphatidylinositol-anchor biosynthesis. Transfers the first alpha-1,4-mannose to GlcN-acyl-PI during GPI precursor assembly. Required for cell wall integrity. The sequence is that of GPI mannosyltransferase 1 (GPI14) from Kluyveromyces lactis (strain ATCC 8585 / CBS 2359 / DSM 70799 / NBRC 1267 / NRRL Y-1140 / WM37) (Yeast).